A 239-amino-acid polypeptide reads, in one-letter code: Immunoglobulin superfamily member 23 (239 aa).

The disordered stretch occupies residues 63 to 93 (ELEAQPPTSSSPKGLPGRPRTSQEVPNAEDN). Residues 94–179 (PSLIPLVTFP…ELVSEPVTVS (86 aa)) enclose the Ig-like domain. The chain crosses the membrane as a helical span at residues 214 to 234 (LIVAATIGGLVLIGSVCFYIL).

The protein localises to the cell membrane. May be involved in osteoclast differentiation. This is Immunoglobulin superfamily member 23 from Mus musculus (Mouse).